Consider the following 151-residue polypeptide: Large ribosomal subunit protein bL9 (151 aa).

This sequence belongs to the bacterial ribosomal protein bL9 family.

Its function is as follows. Binds to the 23S rRNA. The sequence is that of Large ribosomal subunit protein bL9 from Carboxydothermus hydrogenoformans (strain ATCC BAA-161 / DSM 6008 / Z-2901).